The primary structure comprises 252 residues: Adaptation to cold protein B (252 aa).

As to quaternary structure, interacts with AtcC, but not with AtcA and AtcJ. Interacts with the RNA polymerase subunits RpoB and RpoC.

Functionally, involved in cold adaptation. Directly interacts with the RNA polymerase and decreases its activity. May direct the DnaK chaperone to the RNA polymerase to sustain life at low temperatures. Overproduction prevents bacterial growth due to RNA polymerase inhibition. The chain is Adaptation to cold protein B from Shewanella oneidensis (strain ATCC 700550 / JCM 31522 / CIP 106686 / LMG 19005 / NCIMB 14063 / MR-1).